The primary structure comprises 123 residues: MPDLFPSLKYHDGLIPVIVQDAKTLQVLMFAFANEEAVSLTRSTGYAHYFSRSRNKLWKKGEESGHLQKIVRICVDCDEDCLLYLVEQTGCACHEGYASCFFRTMEGEVILPRLKDPADIYSR.

Aspartate 76 serves as a coordination point for Mg(2+). Cysteine 77 serves as a coordination point for Zn(2+). Residues aspartate 78 and aspartate 80 each contribute to the Mg(2+) site. Residues cysteine 93 and cysteine 100 each contribute to the Zn(2+) site.

Belongs to the PRA-CH family. As to quaternary structure, homodimer. It depends on Mg(2+) as a cofactor. Zn(2+) serves as cofactor.

The protein localises to the cytoplasm. The catalysed reaction is 1-(5-phospho-beta-D-ribosyl)-5'-AMP + H2O = 1-(5-phospho-beta-D-ribosyl)-5-[(5-phospho-beta-D-ribosylamino)methylideneamino]imidazole-4-carboxamide. It participates in amino-acid biosynthesis; L-histidine biosynthesis; L-histidine from 5-phospho-alpha-D-ribose 1-diphosphate: step 3/9. Functionally, catalyzes the hydrolysis of the adenine ring of phosphoribosyl-AMP. The chain is Phosphoribosyl-AMP cyclohydrolase from Methanocorpusculum labreanum (strain ATCC 43576 / DSM 4855 / Z).